Reading from the N-terminus, the 252-residue chain is 3-deoxy-manno-octulosonate cytidylyltransferase (252 aa).

The protein belongs to the KdsB family.

The protein resides in the cytoplasm. The catalysed reaction is 3-deoxy-alpha-D-manno-oct-2-ulosonate + CTP = CMP-3-deoxy-beta-D-manno-octulosonate + diphosphate. It participates in nucleotide-sugar biosynthesis; CMP-3-deoxy-D-manno-octulosonate biosynthesis; CMP-3-deoxy-D-manno-octulosonate from 3-deoxy-D-manno-octulosonate and CTP: step 1/1. It functions in the pathway bacterial outer membrane biogenesis; lipopolysaccharide biosynthesis. Functionally, activates KDO (a required 8-carbon sugar) for incorporation into bacterial lipopolysaccharide in Gram-negative bacteria. This is 3-deoxy-manno-octulosonate cytidylyltransferase from Thiobacillus denitrificans (strain ATCC 25259 / T1).